Consider the following 345-residue polypeptide: uncharacterized protein (345 aa).

A run of 8 helical transmembrane segments spans residues 9 to 31 (VVAFSIVLSALLCSISLLQAAFV), 84 to 103 (TLVAILGTGLSAPLLLTYLL), 116 to 138 (YFSLFLCALNFEGVRLFLPILYT), 148 to 170 (VPMQIVMFFRSLALLALFASGIF), 182 to 204 (VVFVLCTVAFLISRYTTIHTIHA), 269 to 286 (WFFWTTAVLSALSYGVLG), 291 to 308 (ISHYYIAAAALPFVIAGY), and 313 to 335 (HGLTWSACIVGLFLLNTASVFFI).

The protein resides in the cell membrane. This is an uncharacterized protein from Treponema pallidum (strain Nichols).